Here is an 80-residue protein sequence, read N- to C-terminus: Exodeoxyribonuclease 7 small subunit (80 aa).

Belongs to the XseB family. As to quaternary structure, heterooligomer composed of large and small subunits.

The protein resides in the cytoplasm. It catalyses the reaction Exonucleolytic cleavage in either 5'- to 3'- or 3'- to 5'-direction to yield nucleoside 5'-phosphates.. Bidirectionally degrades single-stranded DNA into large acid-insoluble oligonucleotides, which are then degraded further into small acid-soluble oligonucleotides. The sequence is that of Exodeoxyribonuclease 7 small subunit from Caulobacter sp. (strain K31).